The primary structure comprises 217 residues: Twisted gastrulation protein homolog 1-A (217 aa).

Positions M1 to G26 are cleaved as a signal peptide. N-linked (GlcNAc...) asparagine glycans are attached at residues N53 and N147.

The protein belongs to the twisted gastrulation protein family.

It is found in the secreted. Its function is as follows. Involved in dorsal-ventral patterning. Appears to function predominantly as a ventralizing factor, through its actions as a BMP signaling agonist, acting through both chd-dependent and chd-independent mechanisms. May also antagonize BMP signaling, probably via formation of ternary complexes with chd and BMPs, resulting in dorsalization. The polypeptide is Twisted gastrulation protein homolog 1-A (twsg1a) (Danio rerio (Zebrafish)).